The following is a 382-amino-acid chain: Cytochrome c biogenesis CcmF N-terminal-like mitochondrial protein 1 (382 aa).

The next 4 membrane-spanning stretches (helical) occupy residues 1–21 (MSIS…FVAF), 30–50 (AFGA…LLFC), 79–99 (HEGS…FFCY), and 117–137 (SLFF…LLRY).

It belongs to the CcmF/CycK/Ccl1/NrfE/CcsA family. In terms of assembly, interacts with CCMFN2 and CCMH.

It localises to the mitochondrion inner membrane. Forms a complex with CCMFC, CCMFN2 and CCMH that performs the assembly of heme with c-type apocytochromes in mitochondria. This chain is Cytochrome c biogenesis CcmF N-terminal-like mitochondrial protein 1, found in Arabidopsis thaliana (Mouse-ear cress).